A 375-amino-acid polypeptide reads, in one-letter code: Flagellin (375 aa).

The protein belongs to the bacterial flagellin family.

It is found in the secreted. The protein localises to the bacterial flagellum. In terms of biological role, flagellin is the subunit protein which polymerizes to form the filaments of bacterial flagella. Flagella are an important component in the invasiveness of B.bacilliformis. This Bartonella bacilliformis protein is Flagellin.